We begin with the raw amino-acid sequence, 1505 residues long: Myosin-6 (1505 aa).

The 50-residue stretch at 8-57 folds into the Myosin N-terminal SH3-like domain; it reads SVGSFVWVEDPDEAWIDGEVVQVNGDEIKVLCTSGKHVVTKISNAYPKDV. A Myosin motor domain is found at 62 to 731; it reads SGVDDMTRLA…QMADLDTRRT (670 aa). ATP is bound by residues 156–163 and 209–217; these read GESGAGKT and NNNSSRFGK. Actin-binding stretches follow at residues 495–529, 531–554, 589–612, and 612–634; these read LIEK…YQTF, THKR…AGDV, FPPM…KQQL, and LVSL…KPNN. 6 consecutive IQ domains span residues 734 to 763, 757 to 786, 782 to 811, 805 to 834, 830 to 859, and 853 to 882; these read LGRS…SAKQ, LRNS…EAAA, REAA…AAVS, LYSA…TKAA, QTKA…AAIT, and LKKA…AARE. A coiled-coil region spans residues 883–1048; sequence TGALQAAKNK…AEKKIMHQQT (166 aa). The region spanning 1148–1452 is the Dilute domain; it reads DRLIQMIGSA…ISSMRTLMTE (305 aa).

This sequence belongs to the TRAFAC class myosin-kinesin ATPase superfamily. Myosin family. Plant myosin class XI subfamily. In terms of assembly, homodimer. Interacts with RABC2A and RABD1. In terms of tissue distribution, expressed in flowers, leaves, roots and stems.

The protein localises to the cytoplasm. In terms of biological role, myosin heavy chain that is required for the cell cycle-regulated transport of various organelles and proteins for their segregation. Functions by binding with its tail domain to receptor proteins on organelles and exerting force with its N-terminal motor domain against actin filaments, thereby transporting its cargo along polarized actin cables. Involved in the tip growth of root hair cells. Plays a major role in trafficking of Golgi stacks, mitochondria and peroxisomes during root hair development. Targets the peroxisome through an interaction with RABC2A. Required for development of pavement cells, trichomes, and stigmatic papillae. The chain is Myosin-6 (XI-2) from Arabidopsis thaliana (Mouse-ear cress).